The primary structure comprises 503 residues: Arabinose import ATP-binding protein AraG (503 aa).

ABC transporter domains are found at residues 5–240 (LRFD…MVGR) and 253–497 (LGDV…LPQG). ATP is bound at residue 37 to 44 (GENGAGKS).

This sequence belongs to the ABC transporter superfamily. Arabinose importer (TC 3.A.1.2.2) family. In terms of assembly, the complex is composed of two ATP-binding proteins (AraG), two transmembrane proteins (AraH) and a solute-binding protein (AraF).

The protein localises to the cell inner membrane. It carries out the reaction L-arabinose(out) + ATP + H2O = L-arabinose(in) + ADP + phosphate + H(+). Its function is as follows. Part of the ABC transporter complex AraFGH involved in arabinose import. Responsible for energy coupling to the transport system. The protein is Arabinose import ATP-binding protein AraG of Burkholderia pseudomallei (strain 1710b).